The primary structure comprises 209 residues: MRDPIETVMNLVPMVVEQTNRGERAYDIFSRLLKERIIFVNGPVEDGMSMLVCAQLLFLEAENPKKEINMYINSPGGVVTSGMAIYDTMQFIRPPVSTLCMGQAASMGSLLLTAGATGHRYALPNARIMVHQPSGGFQGQASDIERHAQDIIKMKRRLNEIYVKHTGRDYDTIERTLDRDHFMTAQEALEFGLIDKVVEARDVSADESK.

The Nucleophile role is filled by S106. H131 is an active-site residue.

It belongs to the peptidase S14 family. Fourteen ClpP subunits assemble into 2 heptameric rings which stack back to back to give a disk-like structure with a central cavity, resembling the structure of eukaryotic proteasomes.

The protein localises to the cytoplasm. It carries out the reaction Hydrolysis of proteins to small peptides in the presence of ATP and magnesium. alpha-casein is the usual test substrate. In the absence of ATP, only oligopeptides shorter than five residues are hydrolyzed (such as succinyl-Leu-Tyr-|-NHMec, and Leu-Tyr-Leu-|-Tyr-Trp, in which cleavage of the -Tyr-|-Leu- and -Tyr-|-Trp bonds also occurs).. Cleaves peptides in various proteins in a process that requires ATP hydrolysis. Has a chymotrypsin-like activity. Plays a major role in the degradation of misfolded proteins. The sequence is that of ATP-dependent Clp protease proteolytic subunit from Brucella canis (strain ATCC 23365 / NCTC 10854 / RM-666).